Consider the following 624-residue polypeptide: tRNA uridine 5-carboxymethylaminomethyl modification enzyme MnmG (624 aa).

Residues 13–18 (GAGHAG), Val-125, and Ser-180 each bind FAD. 272–286 (GPRYCPSIEDKVVKF) lines the NAD(+) pocket. Gln-369 is a binding site for FAD.

This sequence belongs to the MnmG family. Homodimer. Heterotetramer of two MnmE and two MnmG subunits. It depends on FAD as a cofactor.

It localises to the cytoplasm. Its function is as follows. NAD-binding protein involved in the addition of a carboxymethylaminomethyl (cmnm) group at the wobble position (U34) of certain tRNAs, forming tRNA-cmnm(5)s(2)U34. This chain is tRNA uridine 5-carboxymethylaminomethyl modification enzyme MnmG, found in Thermodesulfovibrio yellowstonii (strain ATCC 51303 / DSM 11347 / YP87).